Reading from the N-terminus, the 193-residue chain is MELNVFAGQEKSELSMIEVARAILEERGRDNEMYFNDLVNEIQNYLEKSNSEIRAALPTFYSDLNVDGSFIPLGENKWGLRSWYAIDEIDEEVITLEEDDEDAPKRKKKRVNAFMDGDDDAIDYGHDDPEDEDNYPGSVSSEYDDENPDDEKDEVESYDSEINEIIPDDELDEEDVDLGEDDDEYSDEEVVDE.

Residues 14–83 (LSMIEVARAI…GENKWGLRSW (70 aa)) form the HTH HARE-type domain. Composition is skewed to acidic residues over residues 117-134 (GDDDAIDYGHDDPEDEDN) and 142-193 (EYDD…VVDE). The segment at 117–193 (GDDDAIDYGH…EYSDEEVVDE (77 aa)) is disordered.

It belongs to the RpoE family. RNAP is composed of a core of 2 alpha, a beta and a beta' subunits. The core is associated with a delta subunit and one of several sigma factors.

In terms of biological role, participates in both the initiation and recycling phases of transcription. In the presence of the delta subunit, RNAP displays an increased specificity of transcription, a decreased affinity for nucleic acids, and an increased efficiency of RNA synthesis because of enhanced recycling. The polypeptide is Probable DNA-directed RNA polymerase subunit delta (Streptococcus suis (strain 05ZYH33)).